Reading from the N-terminus, the 193-residue chain is Potassium-transporting ATPase KdpC subunit (193 aa).

The helical transmembrane segment at 7-27 (PLVVIFAVLTVVTGMAYPAVM) threads the bilayer.

This sequence belongs to the KdpC family. The system is composed of three essential subunits: KdpA, KdpB and KdpC.

It is found in the cell inner membrane. Functionally, part of the high-affinity ATP-driven potassium transport (or Kdp) system, which catalyzes the hydrolysis of ATP coupled with the electrogenic transport of potassium into the cytoplasm. This subunit acts as a catalytic chaperone that increases the ATP-binding affinity of the ATP-hydrolyzing subunit KdpB by the formation of a transient KdpB/KdpC/ATP ternary complex. The sequence is that of Potassium-transporting ATPase KdpC subunit from Burkholderia vietnamiensis (strain G4 / LMG 22486) (Burkholderia cepacia (strain R1808)).